The chain runs to 350 residues: MPVLHNRISNDALKAKMLAESEPRTTISFYKYFHIADPKVTRDALYQLFTALNVFGRVYLAHEGINAQISVPASNVETFRAQLYAFDPALEGLRLNIALDDDGKSFWVLRMKVRDRIVADGIDDPHFDASNVGEYLQAAEVNAMLDDPDALFIDMRNHYEYEVGHFENALEIPADTFREQLPKAVEMMQAHKDKKIVMYCTGGIRCEKASAWMKHNGFNKVWHIEGGIIEYARKARDQGLPVRFIGKNFVFDERMGERISDEIIAHCHQCGAPCDSHTNCKNDGCHLLFIQCPVCAEKYKGCCSEICCEESALPPDEQRRRRAGRENGNKIFNKSRGRLNTTLGIPDPTE.

The 95-residue stretch at 146-240 folds into the Rhodanese domain; that stretch reads DDPDALFIDM…YARKARDQGL (95 aa). The Cysteine persulfide intermediate role is filled by Cys-200.

Belongs to the TrhO family.

The enzyme catalyses uridine(34) in tRNA + AH2 + O2 = 5-hydroxyuridine(34) in tRNA + A + H2O. Its function is as follows. Catalyzes oxygen-dependent 5-hydroxyuridine (ho5U) modification at position 34 in tRNAs, the first step in 5-carboxymethoxyuridine (cmo5U) biosynthesis. May be part of an alternate pathway, which is able to bypass cmo5U biogenesis in a subset of tRNAs under aerobic conditions. This chain is tRNA uridine(34) hydroxylase, found in Escherichia coli O6:K15:H31 (strain 536 / UPEC).